Consider the following 318-residue polypeptide: Probable cell division protein WhiA (318 aa).

Positions 281-314 form a DNA-binding region, H-T-H motif; that stretch reads SLKELGQMLVPPVGKSGVNHRLRKIEEISKKLKE.

Belongs to the WhiA family.

Its function is as follows. Involved in cell division and chromosome segregation. This is Probable cell division protein WhiA from Thermoanaerobacter sp. (strain X514).